We begin with the raw amino-acid sequence, 100 residues long: uncharacterized protein (100 aa).

This sequence belongs to the ycf15 family.

It is found in the plastid. The protein resides in the chloroplast. This is an uncharacterized protein from Panax ginseng (Korean ginseng).